The sequence spans 547 residues: Chaperonin GroEL (547 aa).

ATP-binding positions include 30-33 (TLGP), Lys-51, 87-91 (DGTTT), Gly-415, and Asp-496.

This sequence belongs to the chaperonin (HSP60) family. As to quaternary structure, forms a cylinder of 14 subunits composed of two heptameric rings stacked back-to-back. Interacts with the co-chaperonin GroES.

The protein localises to the cytoplasm. The enzyme catalyses ATP + H2O + a folded polypeptide = ADP + phosphate + an unfolded polypeptide.. In terms of biological role, together with its co-chaperonin GroES, plays an essential role in assisting protein folding. The GroEL-GroES system forms a nano-cage that allows encapsulation of the non-native substrate proteins and provides a physical environment optimized to promote and accelerate protein folding. The polypeptide is Chaperonin GroEL (Actinobacillus pleuropneumoniae serotype 5b (strain L20)).